Consider the following 461-residue polypeptide: GTPase Der (461 aa).

EngA-type G domains are found at residues 9-171 (KTIA…NLNK) and 200-371 (IQVG…ECFS). GTP contacts are provided by residues 15–22 (GQPNVGKS), 62–66 (DTGGM), 123–126 (NKID), 206–213 (GRVNVGKS), 253–257 (DTAGI), and 317–320 (NKWD). A KH-like domain is found at 372-456 (KRIPTSLLNS…PLILNAKDKK (85 aa)).

It belongs to the TRAFAC class TrmE-Era-EngA-EngB-Septin-like GTPase superfamily. EngA (Der) GTPase family. In terms of assembly, associates with the 50S ribosomal subunit.

Its function is as follows. GTPase that plays an essential role in the late steps of ribosome biogenesis. The polypeptide is GTPase Der (Helicobacter pylori (strain HPAG1)).